The sequence spans 179 residues: Large ribosomal subunit protein uL5 (179 aa).

The protein belongs to the universal ribosomal protein uL5 family. Part of the 50S ribosomal subunit; part of the 5S rRNA/L5/L18/L25 subcomplex. Contacts the 5S rRNA and the P site tRNA. Forms a bridge to the 30S subunit in the 70S ribosome.

This is one of the proteins that bind and probably mediate the attachment of the 5S RNA into the large ribosomal subunit, where it forms part of the central protuberance. In the 70S ribosome it contacts protein S13 of the 30S subunit (bridge B1b), connecting the 2 subunits; this bridge is implicated in subunit movement. Contacts the P site tRNA; the 5S rRNA and some of its associated proteins might help stabilize positioning of ribosome-bound tRNAs. The chain is Large ribosomal subunit protein uL5 from Geobacillus kaustophilus (strain HTA426).